The sequence spans 177 residues: Large ribosomal subunit protein uL6 (177 aa).

This sequence belongs to the universal ribosomal protein uL6 family. As to quaternary structure, part of the 50S ribosomal subunit.

Functionally, this protein binds to the 23S rRNA, and is important in its secondary structure. It is located near the subunit interface in the base of the L7/L12 stalk, and near the tRNA binding site of the peptidyltransferase center. This chain is Large ribosomal subunit protein uL6, found in Thioalkalivibrio sulfidiphilus (strain HL-EbGR7).